The sequence spans 811 residues: Actin filament-associated protein 1-like 2 (811 aa).

2 disordered regions span residues 67-110 (KEAQ…PPPK) and 132-168 (EPYN…QQHQ). The region spanning 181 to 277 (DAMICAFLWR…WLKVIQDISG (97 aa)) is the PH 1 domain. The tract at residues 294-326 (QRQIHPKAEGTDRHSGASESGSSTDGHPETPEI) is disordered. Basic and acidic residues predominate over residues 299-309 (PKAEGTDRHSG). Residues 359–453 (ALETSNYLNV…WLGLLLLESG (95 aa)) enclose the PH 2 domain. 2 disordered regions span residues 500 to 532 (RGQR…GEAE) and 558 to 631 (LGSP…KERV). Composition is skewed to basic and acidic residues over residues 521–532 (DEPKSEEKGEAE), 566–577 (VSGKKDNEESER), and 622–631 (RLEKSNKERV). Residues 642–737 (LLGKNRTEAE…KENLRKAELG (96 aa)) adopt a coiled-coil conformation.

Interacts with src.

Its subcellular location is the cytoplasm. In terms of biological role, may play a role in a signaling cascade by enhancing the kinase activity of src. Contributes to src-regulated transcription activation. The polypeptide is Actin filament-associated protein 1-like 2 (afap1l2) (Xenopus laevis (African clawed frog)).